Reading from the N-terminus, the 254-residue chain is Ubiquinone/menaquinone biosynthesis C-methyltransferase UbiE (254 aa).

Residues T77, D98, 126–127 (DA), and S143 each bind S-adenosyl-L-methionine.

It belongs to the class I-like SAM-binding methyltransferase superfamily. MenG/UbiE family.

It carries out the reaction a 2-demethylmenaquinol + S-adenosyl-L-methionine = a menaquinol + S-adenosyl-L-homocysteine + H(+). The enzyme catalyses a 2-methoxy-6-(all-trans-polyprenyl)benzene-1,4-diol + S-adenosyl-L-methionine = a 5-methoxy-2-methyl-3-(all-trans-polyprenyl)benzene-1,4-diol + S-adenosyl-L-homocysteine + H(+). Its pathway is quinol/quinone metabolism; menaquinone biosynthesis; menaquinol from 1,4-dihydroxy-2-naphthoate: step 2/2. It functions in the pathway cofactor biosynthesis; ubiquinone biosynthesis. Its function is as follows. Methyltransferase required for the conversion of demethylmenaquinol (DMKH2) to menaquinol (MKH2) and the conversion of 2-polyprenyl-6-methoxy-1,4-benzoquinol (DDMQH2) to 2-polyprenyl-3-methyl-6-methoxy-1,4-benzoquinol (DMQH2). This is Ubiquinone/menaquinone biosynthesis C-methyltransferase UbiE from Blochmanniella pennsylvanica (strain BPEN).